Consider the following 663-residue polypeptide: Forkhead protein sep1 (663 aa).

A DNA-binding region (fork-head) is located at residues lysine 128 to valine 222. 2 disordered regions span residues proline 220–serine 241 and serine 325–threonine 387. A compositionally biased stretch (low complexity) spans serine 340–serine 355. Serine 446 is modified (phosphoserine).

The protein localises to the nucleus. In terms of biological role, required for promoter sequence element PCB-driven, M-phase-specific transcription. Acts as a transcriptional activator with a role in the regulation of mitosis. Regulates septation and the periodic transcription of cdc15. This is Forkhead protein sep1 (sep1) from Schizosaccharomyces pombe (strain 972 / ATCC 24843) (Fission yeast).